Consider the following 252-residue polypeptide: 14-3-3-like protein GF14 omicron (252 aa).

2 positions are modified to phosphoserine: serine 65 and serine 188.

This sequence belongs to the 14-3-3 family.

The protein localises to the nucleus. The protein resides in the cytoplasm. Functionally, is associated with a DNA binding complex that binds to the G box, a well-characterized cis-acting DNA regulatory element found in plant genes. This chain is 14-3-3-like protein GF14 omicron (GRF11), found in Arabidopsis thaliana (Mouse-ear cress).